The primary structure comprises 916 residues: Protein translocase subunit SecA (916 aa).

ATP-binding positions include Gln87, 105–109 (GEGKT), and Asp507. Positions 900, 902, 911, and 912 each coordinate Zn(2+).

The protein belongs to the SecA family. Monomer and homodimer. Part of the essential Sec protein translocation apparatus which comprises SecA, SecYEG and auxiliary proteins SecDF-YajC and YidC. The cofactor is Zn(2+).

It localises to the cell inner membrane. The protein localises to the cytoplasm. The catalysed reaction is ATP + H2O + cellular proteinSide 1 = ADP + phosphate + cellular proteinSide 2.. Its function is as follows. Part of the Sec protein translocase complex. Interacts with the SecYEG preprotein conducting channel. Has a central role in coupling the hydrolysis of ATP to the transfer of proteins into and across the cell membrane, serving both as a receptor for the preprotein-SecB complex and as an ATP-driven molecular motor driving the stepwise translocation of polypeptide chains across the membrane. The protein is Protein translocase subunit SecA of Neisseria meningitidis serogroup B (strain ATCC BAA-335 / MC58).